A 386-amino-acid polypeptide reads, in one-letter code: N-acetylneuraminate epimerase (386 aa).

A signal peptide spans 1–29 (MGMQMKNFKKMMTLMALCFSVAITTSGYA). Kelch repeat units lie at residues 51 to 95 (VIYV…VFLN), 97 to 149 (ELYV…VKLN), 151 to 186 (TMVL…KVIY), 187 to 232 (NYFN…VMGN), 235 to 284 (LMLI…LAGA), 306 to 355 (QNYT…SYGD), and 357 to 386 (VFLI…LLIK). E241 (proton acceptor) is an active-site residue.

This sequence belongs to the NanM family. As to quaternary structure, homodimer.

It is found in the periplasm. The catalysed reaction is N-acetyl-alpha-neuraminate = N-acetyl-beta-neuraminate. In terms of biological role, converts alpha-N-acetylneuranimic acid (Neu5Ac) to the beta-anomer, accelerating the equilibrium between the alpha- and beta-anomers. Probably facilitates sialidase-negative bacteria to compete successfully for limited amounts of extracellular Neu5Ac, which is likely taken up in the beta-anomer. In addition, the rapid removal of sialic acid from solution might be advantageous to the bacterium to damp down host responses. This is N-acetylneuraminate epimerase from Salmonella typhimurium (strain LT2 / SGSC1412 / ATCC 700720).